A 468-amino-acid chain; its full sequence is 55 kDa erythrocyte membrane protein (468 aa).

Residues 73–154 (LVQFEKVTEE…MVSIKVIPNQ (82 aa)) enclose the PDZ domain. An SH3 domain is found at 160–230 (ALQMFMRAQF…PSPELQEWRV (71 aa)). In terms of domain architecture, Guanylate kinase-like spans 284–453 (RKTLVLIGAS…SLKLLEEAFE (170 aa)).

The protein belongs to the MAGUK family.

The protein resides in the membrane. It is found in the cell projection. The protein localises to the stereocilium. In terms of biological role, may play a role in the regulation of neutrophil polarization. The sequence is that of 55 kDa erythrocyte membrane protein (MPP1) from Gallus gallus (Chicken).